A 495-amino-acid polypeptide reads, in one-letter code: ATP synthase subunit beta, chloroplastic (495 aa).

Residue 172 to 179 (GGAGVGKT) coordinates ATP.

The protein belongs to the ATPase alpha/beta chains family. As to quaternary structure, F-type ATPases have 2 components, CF(1) - the catalytic core - and CF(0) - the membrane proton channel. CF(1) has five subunits: alpha(3), beta(3), gamma(1), delta(1), epsilon(1). CF(0) has four main subunits: a(1), b(1), b'(1) and c(9-12).

The protein localises to the plastid. It localises to the chloroplast thylakoid membrane. It catalyses the reaction ATP + H2O + 4 H(+)(in) = ADP + phosphate + 5 H(+)(out). Produces ATP from ADP in the presence of a proton gradient across the membrane. The catalytic sites are hosted primarily by the beta subunits. In Hyacinthoides non-scripta (English bluebell), this protein is ATP synthase subunit beta, chloroplastic.